Reading from the N-terminus, the 339-residue chain is Ketol-acid reductoisomerase (NADP(+)) (339 aa).

The KARI N-terminal Rossmann domain maps to 1 to 182 (MRVYYDRDAD…GGGRSGIIET (182 aa)). Residues 24 to 27 (YGSQ), K48, S51, T53, and 83 to 86 (DELQ) each bind NADP(+). Residue H108 is part of the active site. G134 lines the NADP(+) pocket. One can recognise a KARI C-terminal knotted domain in the interval 183-328 (NFREECETDL…AKLRAMMPWI (146 aa)). Residues D191, E195, E227, and E231 each contribute to the Mg(2+) site. Position 252 (S252) interacts with substrate.

This sequence belongs to the ketol-acid reductoisomerase family. Requires Mg(2+) as cofactor.

It carries out the reaction (2R)-2,3-dihydroxy-3-methylbutanoate + NADP(+) = (2S)-2-acetolactate + NADPH + H(+). The catalysed reaction is (2R,3R)-2,3-dihydroxy-3-methylpentanoate + NADP(+) = (S)-2-ethyl-2-hydroxy-3-oxobutanoate + NADPH + H(+). The protein operates within amino-acid biosynthesis; L-isoleucine biosynthesis; L-isoleucine from 2-oxobutanoate: step 2/4. It functions in the pathway amino-acid biosynthesis; L-valine biosynthesis; L-valine from pyruvate: step 2/4. Functionally, involved in the biosynthesis of branched-chain amino acids (BCAA). Catalyzes an alkyl-migration followed by a ketol-acid reduction of (S)-2-acetolactate (S2AL) to yield (R)-2,3-dihydroxy-isovalerate. In the isomerase reaction, S2AL is rearranged via a Mg-dependent methyl migration to produce 3-hydroxy-3-methyl-2-ketobutyrate (HMKB). In the reductase reaction, this 2-ketoacid undergoes a metal-dependent reduction by NADPH to yield (R)-2,3-dihydroxy-isovalerate. The sequence is that of Ketol-acid reductoisomerase (NADP(+)) from Mesorhizobium japonicum (strain LMG 29417 / CECT 9101 / MAFF 303099) (Mesorhizobium loti (strain MAFF 303099)).